Here is an 860-residue protein sequence, read N- to C-terminus: DNA mismatch repair protein MutS (860 aa).

608-615 (GPNMAGKS) is a binding site for ATP.

It belongs to the DNA mismatch repair MutS family.

Functionally, this protein is involved in the repair of mismatches in DNA. It is possible that it carries out the mismatch recognition step. This protein has a weak ATPase activity. This Borrelia turicatae (strain 91E135) protein is DNA mismatch repair protein MutS.